The chain runs to 352 residues: Holliday junction branch migration complex subunit RuvB (352 aa).

The large ATPase domain (RuvB-L) stretch occupies residues 5–191; it reads TDDFSEQRVI…FGIVARLEFY (187 aa). ATP-binding positions include L30, R31, G72, K75, T76, T77, 138–140, R181, Y191, and R228; that span reads EDY. Residue T76 coordinates Mg(2+). The tract at residues 192–262 is small ATPAse domain (RuvB-S); the sequence is TPLELTRIVT…MADAALVMLD (71 aa). The interval 265–352 is head domain (RuvB-H); that stretch reads PVGFDVMDRK…GPNGELWGGQ (88 aa). Positions 301, 320, and 325 each coordinate DNA.

The protein belongs to the RuvB family. As to quaternary structure, homohexamer. Forms an RuvA(8)-RuvB(12)-Holliday junction (HJ) complex. HJ DNA is sandwiched between 2 RuvA tetramers; dsDNA enters through RuvA and exits via RuvB. An RuvB hexamer assembles on each DNA strand where it exits the tetramer. Each RuvB hexamer is contacted by two RuvA subunits (via domain III) on 2 adjacent RuvB subunits; this complex drives branch migration. In the full resolvosome a probable DNA-RuvA(4)-RuvB(12)-RuvC(2) complex forms which resolves the HJ.

The protein localises to the cytoplasm. The catalysed reaction is ATP + H2O = ADP + phosphate + H(+). Its function is as follows. The RuvA-RuvB-RuvC complex processes Holliday junction (HJ) DNA during genetic recombination and DNA repair, while the RuvA-RuvB complex plays an important role in the rescue of blocked DNA replication forks via replication fork reversal (RFR). RuvA specifically binds to HJ cruciform DNA, conferring on it an open structure. The RuvB hexamer acts as an ATP-dependent pump, pulling dsDNA into and through the RuvAB complex. RuvB forms 2 homohexamers on either side of HJ DNA bound by 1 or 2 RuvA tetramers; 4 subunits per hexamer contact DNA at a time. Coordinated motions by a converter formed by DNA-disengaged RuvB subunits stimulates ATP hydrolysis and nucleotide exchange. Immobilization of the converter enables RuvB to convert the ATP-contained energy into a lever motion, pulling 2 nucleotides of DNA out of the RuvA tetramer per ATP hydrolyzed, thus driving DNA branch migration. The RuvB motors rotate together with the DNA substrate, which together with the progressing nucleotide cycle form the mechanistic basis for DNA recombination by continuous HJ branch migration. Branch migration allows RuvC to scan DNA until it finds its consensus sequence, where it cleaves and resolves cruciform DNA. This Herminiimonas arsenicoxydans protein is Holliday junction branch migration complex subunit RuvB.